The primary structure comprises 2435 residues: Highly reducing polyketide synthase ATR6 (2435 aa).

In terms of domain architecture, Ketosynthase family 3 (KS3) spans 18–450 (AEPIAIVSAA…GSNAHVVLDN (433 aa)). Catalysis depends on for beta-ketoacyl synthase activity residues cysteine 192, histidine 331, and histidine 371. A malonyl-CoA:ACP transacylase (MAT) domain region spans residues 586 to 883 (FVFTGQGAQW…EIGPSAALGG (298 aa)). Catalysis depends on serine 682, which acts as the For malonyltransferase activity. The interval 979–1125 (HDLLGGKVLG…GLVRLALNAS (147 aa)) is N-terminal hotdog fold. Residues 979 to 1291 (HDLLGGKVLG…LRGISMTSVG (313 aa)) form a dehydratase (DH) domain region. In terms of domain architecture, PKS/mFAS DH spans 979–1296 (HDLLGGKVLG…MTSVGLQGNV (318 aa)). Histidine 1011 functions as the For beta-hydroxyacyl dehydratase activity in the catalytic mechanism. A C-terminal hotdog fold region spans residues 1141–1296 (QYPTPARFWY…MTSVGLQGNV (156 aa)). The enoylreductase (ER) domain stretch occupies residues 1724-2037 (GILDTLHFAE…DHNRLRNVVI (314 aa)). The interval 2062–2301 (PEQTYLLVGK…ITGIAVPQPG (240 aa)) is catalytic ketoreductase (KRc) domain. The region spanning 2353-2429 (VLLSSAVGVL…VLCQKIISRM (77 aa)) is the Carrier domain. Serine 2389 carries the O-(pantetheine 4'-phosphoryl)serine modification.

The protein operates within mycotoxin biosynthesis. Its function is as follows. Highly reducing polyketide synthase; part of the core atranone cluster (CAC) which products are predicted to catalyze most or all steps of mycotoxin atranone synthesis, starting from geranylgeranyl pyrophosphate (GGPP). The initial cyclization of GGPP to dolabellane is probably performed by the terpene cyclase ATR13. The Baeyer-Villiger oxidation near the end of the atranone synthesis, which converts atranones D and E to atranones F and G is predicted to be catalyzed by the monooxygenase ATR8. Of the CAC's other predicted gene products, the reducing PKS ATR6 might synthesize a polyketide chain. This polyketide is probably transferred onto the atranone backbone by the polyketide transferase ATR5. Other predicted CAC products include 4 oxygenases (ATR2, ATR3, ATR4, and ATR14), 3 short-chain reductases (ATR7, ATR9, and ATR10), and a methyltransferase (ATR12). These may all be involved in the various steps of atranone biosynthesis, although their specific roles must await experimental determination. In Stachybotrys chlorohalonatus (strain IBT 40285), this protein is Highly reducing polyketide synthase ATR6.